The sequence spans 390 residues: GTPase Obg (390 aa).

Residues 1–159 (MKFVDEASIL…RELLLELMLL (159 aa)) enclose the Obg domain. The segment at 127–147 (NTRFKSSVNRTPRQKTNGTPG) is disordered. The span at 129-145 (RFKSSVNRTPRQKTNGT) shows a compositional bias: polar residues. Residues 160 to 333 (ADVGMLGMPN…LCWDVMTFII (174 aa)) enclose the OBG-type G domain. GTP-binding positions include 166–173 (GMPNAGKS), 191–195 (FTTLV), 213–216 (DIPG), 283–286 (NKID), and 314–316 (SAA). 2 residues coordinate Mg(2+): Ser-173 and Thr-193.

The protein belongs to the TRAFAC class OBG-HflX-like GTPase superfamily. OBG GTPase family. In terms of assembly, monomer. Mg(2+) serves as cofactor.

It is found in the cytoplasm. Functionally, an essential GTPase which binds GTP, GDP and possibly (p)ppGpp with moderate affinity, with high nucleotide exchange rates and a fairly low GTP hydrolysis rate. Plays a role in control of the cell cycle, stress response, ribosome biogenesis and in those bacteria that undergo differentiation, in morphogenesis control. In Escherichia coli (strain K12 / DH10B), this protein is GTPase Obg.